Consider the following 1529-residue polypeptide: ABC multidrug transporter AFR2 (1529 aa).

In terms of domain architecture, ABC transporter 1 spans 144 to 394 (GSLRDLIGNR…FVDMGFHCPS (251 aa)). Asn-235 and Asn-318 each carry an N-linked (GlcNAc...) asparagine glycan. 5 helical membrane-spanning segments follow: residues 510–530 (LFGNFIMALIIGSVFYNLPVT), 539–559 (ALLFFAILMSAFGSALEILIL), 589–609 (IPYKVMNCIIFNLTLYFMTNL), 614–634 (GAYFFFMLISFTLTMVMSMLF), and 648–668 (LAPAALLILGLVMYTGFAVNV). Residue Asn-742 is glycosylated (N-linked (GlcNAc...) asparagine). The helical transmembrane segment at 757–777 (GILIGFFLFFTAIYLTATEFI) threads the bilayer. Residues 845 to 1087 (FSWKDVVYDI…ILIDYFEKNG (243 aa)) enclose the ABC transporter 2 domain. 881–888 (GVSGAGKT) lines the ATP pocket. 5 consecutive transmembrane segments (helical) span residues 1193–1213 (YIWAKVALCSLSGLFIGFSFF), 1229–1249 (VFMMFTIFGQLTQQIMPNFVT), 1268–1288 (IFILSNIVSEIPWAILMGVII), 1314–1334 (LMFLYIEMFLLFNATFSIMIV), and 1353–1373 (MCLIFCGVLASGSSLPGFWVF). The N-linked (GlcNAc...) asparagine glycan is linked to Asn-1434. Residues 1465–1485 (FGLLWVYVVFNVIAAIGIYWL) form a helical membrane-spanning segment. Basic and acidic residues predominate over residues 1493–1505 (GKERASEPEDVQE). The tract at residues 1493-1529 (GKERASEPEDVQEKQVPAQSTEKKYQSISRSSESTVA) is disordered. The segment covering 1518–1529 (QSISRSSESTVA) has biased composition (polar residues).

It belongs to the ABC transporter superfamily. ABCG family. PDR (TC 3.A.1.205) subfamily.

It is found in the cell membrane. The enzyme catalyses itraconazole(in) + ATP + H2O = itraconazole(out) + ADP + phosphate + H(+). It carries out the reaction voriconazole(in) + ATP + H2O = voriconazole(out) + ADP + phosphate + H(+). The catalysed reaction is fluconazole(in) + ATP + H2O = fluconazole(out) + ADP + phosphate + H(+). Pleiotropic ABC efflux transporter that confers resistance to structurally and functionally unrelated compounds including azoles such as fluconazole (FLC), itraconazole (ITC), posaconazole (POS), and voriconazole (VRC). The polypeptide is ABC multidrug transporter AFR2 (Cryptococcus deuterogattii (strain R265) (Cryptococcus gattii VGII (strain R265))).